Consider the following 526-residue polypeptide: MPISLGQAFARNFLGNAPQWYKAAILLFLLINPIAFYLDPFIAGWLLVVEFIFTLAMALKCYPLQPGGLLAIEAVLIGMTSAKQVKHELVANIEVLLLLVFMVAGIYFMKQLLLYVFTKLLIRIHSKTLLSLAFCLVSAFLSAFLDALTVIAVVISVATGFYAIYHKVSSGKEFGNPHDHTDDDAVNELNRQHLDDFRAFLRSLMMHAAIGTALGGVCTLVGEPQNLIIGEQAGWNFGEFAIRMSPVTVPVFICGLLTCVLVEKCRWFGYGAKLPDAVRRIMEDYNRYEEAGRTAQDKAKLIVQAAIALWLILGLAMHLAAVGLIGLSVIVLATSLTGITEEHSLGKAFQEALPFTALLAVFFSVVAVIIDQQLFKPVIQWVLAAEPDAQLALFYLANGLLSMVSDNVFVGTVYINEVKTALLNNAISREQFELLAVAINTGTNLPSVATPNGQAAFLFMLTSALAPLLRLSYGRMVWMALPYTLVLGLVGFFSVEMLLGPLTDWFYQAGWLVLDNVAPAALPVLH.

12 helical membrane passes run 25–45 (ILLF…IAGW), 52–72 (IFTL…LLAI), 89–109 (LVAN…IYFM), 130–164 (LSLA…FYAI), 204–224 (LMMH…VGEP), 242–262 (IRMS…CVLV), 307–327 (IALW…LIGL), 350–370 (QEAL…AVII), 391–411 (LALF…VFVG), 448–468 (VATP…LAPL), 479–499 (MALP…EMLL), and 505–525 (WFYQ…LPVL).

This sequence belongs to the NhaB Na(+)/H(+) (TC 2.A.34) antiporter family.

Its subcellular location is the cell inner membrane. It catalyses the reaction 2 Na(+)(in) + 3 H(+)(out) = 2 Na(+)(out) + 3 H(+)(in). In terms of biological role, na(+)/H(+) antiporter that extrudes sodium in exchange for external protons. The sequence is that of Na(+)/H(+) antiporter NhaB from Aeromonas hydrophila subsp. hydrophila (strain ATCC 7966 / DSM 30187 / BCRC 13018 / CCUG 14551 / JCM 1027 / KCTC 2358 / NCIMB 9240 / NCTC 8049).